Consider the following 425-residue polypeptide: Type I restriction enzyme MjaVIII specificity subunit (425 aa).

It belongs to the type-I restriction system S methylase family. In terms of assembly, the type I restriction/modification system is composed of three polypeptides R, M and S.

The specificity (S) subunit of a type I restriction enzyme; this subunit dictates DNA sequence specificity. The M and S subunits together form a methyltransferase (MTase) that methylates A-2 on the top and A-3 on the bottom strand of the sequence 5'-GAYN(5)GTAA-3'. In the presence of the R subunit the complex can also act as an endonuclease, binding to the same target sequence but cutting the DNA some distance from this site. Whether the DNA is cut or modified depends on the methylation state of the target sequence. When the target site is unmodified, the DNA is cut. When the target site is hemimethylated, the complex acts as a maintenance MTase modifying the DNA so that both strands become methylated. After locating a non-methylated recognition site, the enzyme complex serves as a molecular motor that translocates DNA in an ATP-dependent manner until a collision occurs that triggers cleavage. This is Type I restriction enzyme MjaVIII specificity subunit from Methanocaldococcus jannaschii (strain ATCC 43067 / DSM 2661 / JAL-1 / JCM 10045 / NBRC 100440) (Methanococcus jannaschii).